The following is a 478-amino-acid chain: Glycogen synthase (478 aa).

Position 15 (Lys15) interacts with ADP-alpha-D-glucose.

This sequence belongs to the glycosyltransferase 1 family. Bacterial/plant glycogen synthase subfamily.

It carries out the reaction [(1-&gt;4)-alpha-D-glucosyl](n) + ADP-alpha-D-glucose = [(1-&gt;4)-alpha-D-glucosyl](n+1) + ADP + H(+). It participates in glycan biosynthesis; glycogen biosynthesis. Synthesizes alpha-1,4-glucan chains using ADP-glucose. In Clostridium botulinum (strain Alaska E43 / Type E3), this protein is Glycogen synthase.